A 561-amino-acid polypeptide reads, in one-letter code: Formate--tetrahydrofolate ligase (561 aa).

66-73 (TPAGEGKT) serves as a coordination point for ATP.

This sequence belongs to the formate--tetrahydrofolate ligase family.

The catalysed reaction is (6S)-5,6,7,8-tetrahydrofolate + formate + ATP = (6R)-10-formyltetrahydrofolate + ADP + phosphate. The protein operates within one-carbon metabolism; tetrahydrofolate interconversion. The polypeptide is Formate--tetrahydrofolate ligase (Methylibium petroleiphilum (strain ATCC BAA-1232 / LMG 22953 / PM1)).